The chain runs to 136 residues: Large ribosomal subunit protein uL16 (136 aa).

Belongs to the universal ribosomal protein uL16 family. As to quaternary structure, part of the 50S ribosomal subunit.

Its function is as follows. Binds 23S rRNA and is also seen to make contacts with the A and possibly P site tRNAs. In Rickettsia africae (strain ESF-5), this protein is Large ribosomal subunit protein uL16.